The chain runs to 78 residues: U7-lycotoxin-Ls1d (78 aa).

Positions methionine 1 to alanine 22 are cleaved as a signal peptide. Positions glutamine 23 to glycine 26 are excised as a propeptide.

The protein belongs to the neurotoxin 19 (CSTX) family. 07 (U7-Lctx) subfamily. Post-translationally, contains 4 disulfide bonds. Expressed by the venom gland.

The protein resides in the secreted. The chain is U7-lycotoxin-Ls1d from Lycosa singoriensis (Wolf spider).